The primary structure comprises 380 residues: Chaperone protein DnaJ (380 aa).

A J domain is found at 5–72; the sequence is DYYETLGVAK…QKRAAYDQYG (68 aa). The segment at 140 to 218 adopts a CR-type zinc-finger fold; sequence GKDTQIRIPS…CNGAGRIKSN (79 aa). 8 residues coordinate Zn(2+): C153, C156, C170, C173, C192, C195, C206, and C209. CXXCXGXG motif repeat units lie at residues 153-160, 170-177, 192-199, and 206-213; these read CSTCDGTG, CPTCSGSG, CPSCHGTG, and CTACNGAG. The segment at 357 to 380 is disordered; it reads LKKGGERHSPNAKSWTDRVKDLFK.

This sequence belongs to the DnaJ family. Homodimer. It depends on Zn(2+) as a cofactor.

The protein resides in the cytoplasm. Functionally, participates actively in the response to hyperosmotic and heat shock by preventing the aggregation of stress-denatured proteins and by disaggregating proteins, also in an autonomous, DnaK-independent fashion. Unfolded proteins bind initially to DnaJ; upon interaction with the DnaJ-bound protein, DnaK hydrolyzes its bound ATP, resulting in the formation of a stable complex. GrpE releases ADP from DnaK; ATP binding to DnaK triggers the release of the substrate protein, thus completing the reaction cycle. Several rounds of ATP-dependent interactions between DnaJ, DnaK and GrpE are required for fully efficient folding. Also involved, together with DnaK and GrpE, in the DNA replication of plasmids through activation of initiation proteins. The chain is Chaperone protein DnaJ from Methylibium petroleiphilum (strain ATCC BAA-1232 / LMG 22953 / PM1).